Consider the following 82-residue polypeptide: Small ribosomal subunit protein bS18A (82 aa).

It belongs to the bacterial ribosomal protein bS18 family. As to quaternary structure, part of the 30S ribosomal subunit. Forms a tight heterodimer with protein bS6.

In terms of biological role, binds as a heterodimer with protein bS6 to the central domain of the 16S rRNA, where it helps stabilize the platform of the 30S subunit. The protein is Small ribosomal subunit protein bS18A of Streptomyces griseus subsp. griseus (strain JCM 4626 / CBS 651.72 / NBRC 13350 / KCC S-0626 / ISP 5235).